The chain runs to 447 residues: Tubulin beta-2 chain (447 aa).

Q9, E67, S136, G140, T141, G142, N202, and N224 together coordinate GTP. E67 lines the Mg(2+) pocket. Positions 411 to 425 are enriched in polar residues; sequence SNMNDLVSEYQQYQD. The segment at 411–447 is disordered; it reads SNMNDLVSEYQQYQDATAEEDEYEEEEEDYHQEHDEM. The segment covering 427-440 has biased composition (acidic residues); the sequence is TAEEDEYEEEEEDY.

Belongs to the tubulin family. Dimer of alpha and beta chains. A typical microtubule is a hollow water-filled tube with an outer diameter of 25 nm and an inner diameter of 15 nM. Alpha-beta heterodimers associate head-to-tail to form protofilaments running lengthwise along the microtubule wall with the beta-tubulin subunit facing the microtubule plus end conferring a structural polarity. Microtubules usually have 13 protofilaments but different protofilament numbers can be found in some organisms and specialized cells. Mg(2+) is required as a cofactor.

The protein localises to the cytoplasm. The protein resides in the cytoskeleton. Tubulin is the major constituent of microtubules, a cylinder consisting of laterally associated linear protofilaments composed of alpha- and beta-tubulin heterodimers. Microtubules grow by the addition of GTP-tubulin dimers to the microtubule end, where a stabilizing cap forms. Below the cap, tubulin dimers are in GDP-bound state, owing to GTPase activity of alpha-tubulin. The protein is Tubulin beta-2 chain (TUBB2) of Pisum sativum (Garden pea).